The sequence spans 94 residues: Selenoprotein K (94 aa).

Residues 20–42 (LSFITDFFWGIAEFVVFFFKTLL) form a helical membrane-spanning segment. Residues 48 to 94 (KRRGYGGSSDSRYDDGRGPPGNPPRRMGRISHLRGPSPPPMAGGUGR) form a disordered region. Position 92 (Sec-92) is a non-standard amino acid, selenocysteine.

This sequence belongs to the selenoprotein K family. Interacts with DERL1, DERL2, DERL3 and SELENOS. The SELENOK-SELENOS complex interacts with VCP. Interacts with ZDHHC6. In terms of processing, cleaved by CAPN2/m-calpain in resting macrophages but not in activated macrophages. Macrophage activation up-regulates expression of the calpain inhibitor CAST/calpastatin, resulting in inhibition of CAPN2 activity. Post-translationally, truncated SELENOK proteins produced by failed UGA/Sec decoding are ubiquitinated by the CRL2(KLHDC2) complex, which recognizes the diglycine (Gly-Gly) at the C-terminus of truncated SELENOK proteins.

It is found in the endoplasmic reticulum membrane. The protein resides in the cell membrane. In terms of biological role, required for Ca(2+) flux in immune cells and plays a role in T-cell proliferation and in T-cell and neutrophil migration. Involved in endoplasmic reticulum-associated degradation (ERAD) of soluble glycosylated proteins. Required for palmitoylation and cell surface expression of CD36 and involved in macrophage uptake of low-density lipoprotein and in foam cell formation. Together with ZDHHC6, required for palmitoylation of ITPR1 in immune cells, leading to regulate ITPR1 stability and function. Plays a role in protection of cells from ER stress-induced apoptosis. Protects cells from oxidative stress when overexpressed in cardiomyocytes. This Rattus norvegicus (Rat) protein is Selenoprotein K.